Here is a 363-residue protein sequence, read N- to C-terminus: Pyrimidine monooxygenase RutA (363 aa).

FMN is bound by residues I49–K50, N115, E124, R140–Y141, and S190.

This sequence belongs to the NtaA/SnaA/DszA monooxygenase family. RutA subfamily.

The catalysed reaction is uracil + FMNH2 + NADH + O2 = (Z)-3-ureidoacrylate + FMN + NAD(+) + H2O + H(+). It catalyses the reaction thymine + FMNH2 + NADH + O2 = (Z)-2-methylureidoacrylate + FMN + NAD(+) + H2O + H(+). In terms of biological role, catalyzes the pyrimidine ring opening between N-3 and C-4 by an unusual flavin hydroperoxide-catalyzed mechanism, adding oxygen atoms in the process to yield ureidoacrylate peracid, that immediately reacts with FMN forming ureidoacrylate and FMN-N(5)-oxide. The FMN-N(5)-oxide reacts spontaneously with NADH to produce FMN. Requires the flavin reductase RutF to regenerate FMN in vivo. In Escherichia coli O44:H18 (strain 042 / EAEC), this protein is Pyrimidine monooxygenase RutA.